The sequence spans 315 residues: Probable cell division protein WhiA (315 aa).

The H-T-H motif DNA-binding region spans 275–309 (TLKELGEMVSSGTVSKSGVNHRLRKIDEIADALRR).

The protein belongs to the WhiA family.

Functionally, involved in cell division and chromosome segregation. The sequence is that of Probable cell division protein WhiA from Lysinibacillus sphaericus (strain C3-41).